A 95-amino-acid polypeptide reads, in one-letter code: U6 snRNA-associated Sm-like protein LSm2 (95 aa).

The region spanning 2–76 (LFYSFFKSLV…VRYVQLPADE (75 aa)) is the Sm domain. At Thr79 the chain carries Phosphothreonine.

The protein belongs to the snRNP Sm proteins family. Component of the precatalytic spliceosome (spliceosome B complex). Component of the U4/U6-U5 tri-snRNP complex, a building block of the precatalytic spliceosome (spliceosome B complex). The U4/U6-U5 tri-snRNP complex is composed of the U4, U6 and U5 snRNAs and at least PRPF3, PRPF4, PRPF6, PRPF8, PRPF31, SNRNP200, TXNL4A, SNRNP40, SNRPB, SNRPD1, SNRPD2, SNRPD3, SNRPE, SNRPF, SNRPG, DDX23, CD2BP2, PPIH, SNU13, EFTUD2, SART1 and USP39, plus LSM2, LSM3, LSM4, LSM5, LSM6, LSM7 and LSM8. LSM2, LSM3, LSM4, LSM5, LSM6, LSM7 and LSM8 form a heptameric, ring-shaped subcomplex (the LSM2-8 complex) that is part of the U4/U6-U5 tri-snRNP complex and the precatalytic spliceosome.

The protein resides in the nucleus. In terms of biological role, plays a role in pre-mRNA splicing as component of the U4/U6-U5 tri-snRNP complex that is involved in spliceosome assembly, and as component of the precatalytic spliceosome (spliceosome B complex). The heptameric LSM2-8 complex binds specifically to the 3'-terminal U-tract of U6 snRNA. The protein is U6 snRNA-associated Sm-like protein LSm2 (LSM2) of Homo sapiens (Human).